Consider the following 739-residue polypeptide: Homeobox protein SIX5 (739 aa).

Composition is skewed to low complexity over residues 1-24 (MATLPAEPSAGPAAGGEAVAAAAA), 34-61 (QLLQTLQAAEGEAAAAAGAGAGAAAAGA), and 74-83 (PEAASEPPTG). Disordered regions lie at residues 1–84 (MATL…PTGL), 251–294 (NRRQ…AAPV), 361–381 (LTGGGGAPPPQPSPQGASETK), and 617–650 (LSAQQPPPAAATTSSTSLPFSPDSPGLLPNFPAP). The segment at residues 201–260 (GEETVYCFKERSRAALKACYRGNRYPTPDEKRRLATLTGLSLTQVSNWFKNRRQRDRTGA) is a DNA-binding region (homeobox). Positions 279–289 (ESSRSPEDLER) are enriched in basic and acidic residues. The span at 617–646 (LSAQQPPPAAATTSSTSLPFSPDSPGLLPN) shows a compositional bias: low complexity.

The protein belongs to the SIX/Sine oculis homeobox family. As to quaternary structure, probably binds DNA dimer. Interacts with EYA3, and probably EYA1 and EYA2. In terms of tissue distribution, expressed in adult but not in fetal eyes. Found in corneal epithelium and endothelium, lens epithelium, ciliary body epithelia, cellular layers of the retina and the sclera.

The protein resides in the cytoplasm. The protein localises to the nucleus. Its function is as follows. Transcription factor that is thought to be involved in regulation of organogenesis. May be involved in determination and maintenance of retina formation. Binds a 5'-GGTGTCAG-3' motif present in the ARE regulatory element of ATP1A1. Binds a 5'-TCA[AG][AG]TTNC-3' motif present in the MEF3 element in the myogenin promoter, and in the IGFBP5 promoter. Thought to be regulated by association with Dach and Eya proteins, and seems to be coactivated by EYA1, EYA2 and EYA3. In Homo sapiens (Human), this protein is Homeobox protein SIX5 (SIX5).